Reading from the N-terminus, the 1463-residue chain is Secretory phospholipase A2 receptor (1463 aa).

The signal sequence occupies residues 1-20 (MPLLSLSLLLLLLQVPAGSA). Residues 21–1392 (ETAAWAVTPE…IHTVKKHPGK (1372 aa)) are Extracellular-facing. In terms of domain architecture, Ricin B-type lectin spans 38–115 (KGIFIIQSEN…CDSTHVSLKW (78 aa)). Residue Asn93 is glycosylated (N-linked (GlcNAc...) asparagine). The Fibronectin type-II domain occupies 173–221 (AHGTPCMFPFQYNQQWHHECTREGREDNLLWCATTSRYERDEKWGFCPD). 16 disulfide bridges follow: Cys178-Cys204, Cys192-Cys219, Cys260-Cys354, Cys330-Cys346, Cys406-Cys501, Cys478-Cys493, Cys617-Cys634, Cys699-Cys796, Cys774-Cys788, Cys840-Cys938, Cys915-Cys930, Cys992-Cys1096, Cys1068-Cys1088, Cys1209-Cys1223, Cys1280-Cys1377, and Cys1354-Cys1369. C-type lectin domains lie at 229–353 (CDAV…LPYV), 357–500 (YLNP…LFYL), 504–641 (TGLV…KAMS), 646–795 (PVEN…REWI), 799–937 (PRDV…MPSI), 941–1095 (KKVW…YGFV), 1099–1230 (MQDA…LQGA), and 1235–1376 (PTET…KGFI). Asn454 carries N-linked (GlcNAc...) asparagine glycosylation. N-linked (GlcNAc...) asparagine glycosylation is present at Asn1057. The helical transmembrane segment at 1393 to 1421 (GPSHSVIPLTVALTLLVILAISTLSFCMY) threads the bilayer. Over 1422–1463 (KHSHIIFGRLAQFRNPYYPSANFSTVHLEENILISDLEKNDQ) the chain is Cytoplasmic. The short motif at 1436 to 1442 (NPYYPSA) is the Endocytosis signal element.

As to quaternary structure, interacts with sPLA2-IB/PLA2G1B; this interaction mediates intracellular signaling as well as clearance of extracellular sPLA2-IB/PLA2G1B via endocytotic pathway. Interacts with sPLA2-X/PLA2G10; this interaction mediates sPLA2-X/PLA2G10 clearance and inactivation. In terms of processing, the secretory phospholipase A2 receptor form may be produced by the action of metalloproteinases. It contains all extracellular domains and only lacks transmembrane and cytosolic regions. It is however unclear whether this form is produced by proteolytic cleavage as suggested by some experiments, or by alternative splicing.

It localises to the cell membrane. Its subcellular location is the secreted. In terms of biological role, receptor for secretory phospholipase A2 (sPLA2). Also able to bind to snake PA2-like toxins. Although its precise function remains unclear, binding of sPLA2 to its receptor participates in both positive and negative regulation of sPLA2 functions as well as clearance of sPLA2. Binding of sPLA2-IB/PLA2G1B induces various effects depending on the cell type, such as activation of the mitogen-activated protein kinase (MAPK) cascade to induce cell proliferation, the production of lipid mediators, selective release of arachidonic acid in bone marrow-derived mast cells. In neutrophils, binding of sPLA2-IB/PLA2G1B can activate p38 MAPK to stimulate elastase release and cell adhesion. May be involved in responses in pro-inflammatory cytokine productions during endotoxic shock. Also has endocytic properties and rapidly internalizes sPLA2 ligands, which is particularly important for the clearance of extracellular sPLA2s to protect their potent enzymatic activities. The soluble secretory phospholipase A2 receptor form is circulating and acts as a negative regulator of sPLA2 functions by blocking the biological functions of sPLA2-IB/PLA2G1B and sPLA2-X/PLA2G10. This is Secretory phospholipase A2 receptor (PLA2R1) from Bos taurus (Bovine).